Here is a 249-residue protein sequence, read N- to C-terminus: Triosephosphate isomerase (249 aa).

Residue 8–10 (NWK) coordinates substrate. His-95 serves as the catalytic Electrophile. Catalysis depends on Glu-163, which acts as the Proton acceptor. 2 residues coordinate substrate: Gly-169 and Ser-209.

This sequence belongs to the triosephosphate isomerase family. Homodimer.

The protein resides in the cytoplasm. It carries out the reaction D-glyceraldehyde 3-phosphate = dihydroxyacetone phosphate. It functions in the pathway carbohydrate biosynthesis; gluconeogenesis. The protein operates within carbohydrate degradation; glycolysis; D-glyceraldehyde 3-phosphate from glycerone phosphate: step 1/1. Involved in the gluconeogenesis. Catalyzes stereospecifically the conversion of dihydroxyacetone phosphate (DHAP) to D-glyceraldehyde-3-phosphate (G3P). This Orientia tsutsugamushi (strain Boryong) (Rickettsia tsutsugamushi) protein is Triosephosphate isomerase.